The following is a 146-amino-acid chain: Late protein OPG112 (146 aa).

The chain crosses the membrane as a helical span at residues 10–32; that stretch reads LAMTAFFGELSTLDIMALIMSIF.

The protein belongs to the orthopoxvirus OPG112 family.

Its subcellular location is the host membrane. The protein localises to the host cytoplasm. Functionally, contributes to the formation of crescents and immature virions (IV). Interacts with phosphatidylinositol-3-phosphate (PI3P) and phosphatidylinositol-4-phosphate (PI4P) lipids in order to form virion membranes. Mechanistically, mediates proper formation of OPG125-hexamers, and hence the honey comb lattice and spherical immature virus. The polypeptide is Late protein OPG112 (OPG112) (Bos taurus (Bovine)).